Here is a 238-residue protein sequence, read N- to C-terminus: Ribonuclease 3 (238 aa).

Positions 9–141 (LIDFMEKIGY…VVAAVYIDGG (133 aa)) constitute an RNase III domain. E54 contributes to the Mg(2+) binding site. D58 is an active-site residue. D127 and E130 together coordinate Mg(2+). E130 is an active-site residue. Positions 168 to 237 (DYKTSLQEIT…ARRAIEKLKG (70 aa)) constitute a DRBM domain.

It belongs to the ribonuclease III family. Homodimer. Mg(2+) is required as a cofactor.

The protein resides in the cytoplasm. The catalysed reaction is Endonucleolytic cleavage to 5'-phosphomonoester.. Its function is as follows. Digests double-stranded RNA. Involved in the processing of primary rRNA transcript to yield the immediate precursors to the large and small rRNAs (23S and 16S). Processes some mRNAs, and tRNAs when they are encoded in the rRNA operon. Processes pre-crRNA and tracrRNA of type II CRISPR loci if present in the organism. The protein is Ribonuclease 3 of Pseudothermotoga lettingae (strain ATCC BAA-301 / DSM 14385 / NBRC 107922 / TMO) (Thermotoga lettingae).